The sequence spans 390 residues: NADH-quinone oxidoreductase subunit H (390 aa).

Helical transmembrane passes span 4 to 24, 78 to 98, 120 to 140, 157 to 177, 191 to 211, 247 to 266, 278 to 298, 315 to 337, and 341 to 360; these read WLLT…ALLT, LVYT…FGGI, VLAL…GGWA, MISY…LVGS, GWMI…SFAE, YVNM…GGWR, IADI…FVFI, FGWK…YIAF, and WGWW…LLAL.

The protein belongs to the complex I subunit 1 family. In terms of assembly, NDH-1 is composed of 15 different subunits. Subunits NuoA, H, J, K, L, M, N constitute the membrane sector of the complex.

It is found in the cell membrane. The enzyme catalyses a quinone + NADH + 5 H(+)(in) = a quinol + NAD(+) + 4 H(+)(out). Its function is as follows. NDH-1 shuttles electrons from NADH, via FMN and iron-sulfur (Fe-S) centers, to quinones in the respiratory chain. The immediate electron acceptor for the enzyme in this species is believed to be ubiquinone. Couples the redox reaction to proton translocation (for every two electrons transferred, four hydrogen ions are translocated across the cytoplasmic membrane), and thus conserves the redox energy in a proton gradient. This subunit may bind ubiquinone. In Deinococcus deserti (strain DSM 17065 / CIP 109153 / LMG 22923 / VCD115), this protein is NADH-quinone oxidoreductase subunit H.